We begin with the raw amino-acid sequence, 461 residues long: MEHLLLFLSCLSMLVSIAFQSVLLPLILHLFSFFLLSFLSFLHFRSFSANNFKHHSLFLVPKRRSFSISVLPAAAPSSPSSNSFLFPSLSHYFYSLRDTTMVKLTESAVYIRTKCSLENVKKLNLWGCGIDDIQVCEKMSLLEVLSLSVNEVKSLAPLQHCKNLKEVYLRKNCLESLDELEYLKELPNLRTLWIDENPCVGEGGQEYRRKVIRVLPNLTKLDDKPVTTTDHQEAIEDSIPECDMHNSHYSARSNRSNSIDLMSRSLYVGPTVVDRIVQPQLLHFGDTSDEERTTYPARSFSVEVPGLPLTEDHTTVYLDSAPQSHIGSRHNLMSQSMYGTLCGTLAEEPSSADGEDDWNDFSIEEDRVMVQMPLAASHRMYQSMHEGMVIEMKRPPVYGRSVSMPRRRATNLTTRASSMSPAREQRLTKIMSAVSVLLDELDTDGLRQVVDEAQRRLKKQR.

LRR repeat units follow at residues 119-140 (NVKK…EKMS), 141-162 (LLEV…QHCK), and 163-184 (NLKE…EYLK). The 41-residue stretch at 197–237 (NPCVGEGGQEYRRKVIRVLPNLTKLDDKPVTTTDHQEAIED) folds into the LRRCT domain.

This is an uncharacterized protein from Caenorhabditis elegans.